Consider the following 229-residue polypeptide: Small ribosomal subunit protein uS3 (229 aa).

Residues 38–106 (IREYIENKLF…KVHINVMEVK (69 aa)) form the KH type-2 domain. The span at 208-217 (PEVDENEETK) shows a compositional bias: acidic residues. Positions 208–229 (PEVDENEETKEENKEKSEEKSE) are disordered. Positions 218–229 (EENKEKSEEKSE) are enriched in basic and acidic residues.

This sequence belongs to the universal ribosomal protein uS3 family. Part of the 30S ribosomal subunit. Forms a tight complex with proteins S10 and S14.

In terms of biological role, binds the lower part of the 30S subunit head. Binds mRNA in the 70S ribosome, positioning it for translation. This chain is Small ribosomal subunit protein uS3, found in Natranaerobius thermophilus (strain ATCC BAA-1301 / DSM 18059 / JW/NM-WN-LF).